Consider the following 418-residue polypeptide: tRNA wybutosine-synthesizing protein 2 (418 aa).

S-adenosyl-L-methionine-binding positions include Ser228, Lys235, 275–276 (EI), and 302–303 (EN).

This sequence belongs to the class I-like SAM-binding methyltransferase superfamily. TRM5/TYW2 family.

The protein resides in the cytoplasm. It is found in the nucleus. It catalyses the reaction 4-demethylwyosine(37) in tRNA(Phe) + S-adenosyl-L-methionine = 4-demethyl-7-[(3S)-3-amino-3-carboxypropyl]wyosine(37) in tRNA(Phe) + S-methyl-5'-thioadenosine + H(+). It participates in tRNA modification; wybutosine-tRNA(Phe) biosynthesis. In terms of biological role, S-adenosyl-L-methionine-dependent transferase that acts as a component of the wybutosine biosynthesis pathway. Wybutosine is a hyper modified guanosine with a tricyclic base found at the 3'-position adjacent to the anticodon of eukaryotic phenylalanine tRNA. Catalyzes the transfer of the alpha-amino-alpha-carboxypropyl (acp) group from S-adenosyl-L-methionine to the C-7 position of 4-demethylwyosine (imG-14) to produce wybutosine-86. The protein is tRNA wybutosine-synthesizing protein 2 (trm12) of Schizosaccharomyces pombe (strain 972 / ATCC 24843) (Fission yeast).